We begin with the raw amino-acid sequence, 355 residues long: Ataxin-3 (355 aa).

Residue M1 forms a Peptide (Met-Gly) (interchain with G-Cter in ubiquitin) linkage. The Josephin domain maps to 1–180 (MESIFHEKQE…DCEADQLLQM (180 aa)). Residue C14 is the Nucleophile of the active site. H119 acts as the Proton acceptor in catalysis. N134 is a catalytic residue. K200 participates in a covalent cross-link: Glycyl lysine isopeptide (Lys-Gly) (interchain with G-Cter in ubiquitin). S219 bears the Phosphoserine mark. UIM domains are found at residues 224 to 243 (EDED…IDME) and 244 to 263 (DEEA…SSRS). Over residues 257 to 275 (MQGSSRSMCENSPQTSSPD) the composition is skewed to polar residues. The segment at 257 to 355 (MQGSSRSMCE…KDNLKAERKK (99 aa)) is disordered. 3 positions are modified to phosphoserine: S268, S272, and S273. Residues 279 to 289 (EELRRRREAYF) are compositionally biased toward basic and acidic residues. At S321 the chain carries Phosphoserine. The UIM 3 domain maps to 329 to 348 (SEEDMLRAAVTMSLETAKDN). Positions 344–355 (TAKDNLKAERKK) are enriched in basic and acidic residues.

In terms of assembly, interacts with STUB1/CHIP (when monoubiquitinated). Interacts with DNA repair proteins RAD23A and RAD23B. Interacts with BECN1 (via its poly-Gln domain). Interacts with PRKN, UBR2, VCP and tubulin. In terms of processing, monoubiquitinated by UBE2W, possibly leading to activate the deubiquitinating enzyme activity.

It localises to the nucleus matrix. It is found in the nucleus. The protein resides in the lysosome membrane. The catalysed reaction is Thiol-dependent hydrolysis of ester, thioester, amide, peptide and isopeptide bonds formed by the C-terminal Gly of ubiquitin (a 76-residue protein attached to proteins as an intracellular targeting signal).. In terms of biological role, deubiquitinating enzyme involved in protein homeostasis maintenance, transcription, cytoskeleton regulation, myogenesis and degradation of misfolded chaperone substrates. Binds long polyubiquitin chains and trims them, while it has weak or no activity against chains of 4 or less ubiquitins. Involved in degradation of misfolded chaperone substrates via its interaction with STUB1/CHIP: recruited to monoubiquitinated STUB1/CHIP, and restricts the length of ubiquitin chain attached to STUB1/CHIP substrates and preventing further chain extension. Interacts with key regulators of transcription and represses transcription: acts as a histone-binding protein that regulates transcription. Acts as a negative regulator of mTORC1 signaling in response to amino acid deprivation by mediating deubiquitination of RHEB, thereby promoting RHEB inactivation by the TSC-TBC complex. Regulates autophagy via the deubiquitination of 'Lys-402' of BECN1 leading to the stabilization of BECN1. This Mus musculus (Mouse) protein is Ataxin-3 (Atxn3).